The chain runs to 1279 residues: Talin-A (1279 aa).

The 282-residue stretch at 84 to 365 (RPQKFKLLDG…GYIEIIMKAR (282 aa)) folds into the FERM domain.

The protein localises to the cytoplasm. It localises to the cytoskeleton. Its subcellular location is the cell cortex. Its function is as follows. Actin-binding protein that may be involved in the control of cell motility and chemotaxis. This Dictyostelium discoideum (Social amoeba) protein is Talin-A (talA).